The following is a 127-amino-acid chain: Aspartate 1-decarboxylase (127 aa).

Ser25 functions as the Schiff-base intermediate with substrate; via pyruvic acid in the catalytic mechanism. Ser25 bears the Pyruvic acid (Ser) mark. Position 57 (Thr57) interacts with substrate. Tyr58 (proton donor) is an active-site residue. 73–75 (GSA) serves as a coordination point for substrate.

Belongs to the PanD family. As to quaternary structure, heterooctamer of four alpha and four beta subunits. It depends on pyruvate as a cofactor. Post-translationally, is synthesized initially as an inactive proenzyme, which is activated by self-cleavage at a specific serine bond to produce a beta-subunit with a hydroxyl group at its C-terminus and an alpha-subunit with a pyruvoyl group at its N-terminus.

Its subcellular location is the cytoplasm. It catalyses the reaction L-aspartate + H(+) = beta-alanine + CO2. Its pathway is cofactor biosynthesis; (R)-pantothenate biosynthesis; beta-alanine from L-aspartate: step 1/1. Catalyzes the pyruvoyl-dependent decarboxylation of aspartate to produce beta-alanine. The sequence is that of Aspartate 1-decarboxylase from Dechloromonas aromatica (strain RCB).